Consider the following 186-residue polypeptide: Elongation factor P (186 aa).

It belongs to the elongation factor P family.

It is found in the cytoplasm. The protein operates within protein biosynthesis; polypeptide chain elongation. Functionally, involved in peptide bond synthesis. Stimulates efficient translation and peptide-bond synthesis on native or reconstituted 70S ribosomes in vitro. Probably functions indirectly by altering the affinity of the ribosome for aminoacyl-tRNA, thus increasing their reactivity as acceptors for peptidyl transferase. This chain is Elongation factor P, found in Prochlorococcus marinus subsp. pastoris (strain CCMP1986 / NIES-2087 / MED4).